Here is an 801-residue protein sequence, read N- to C-terminus: MSSALEVEGSGSPGVEPAATATASRLKRHDSLFGDAEKVSGGKHHGGSAVSWAVTLHLAFQSVGIIYGDIGTSPLYVYSSTFPDGIGHRDDLVGVLSLILYTLIIIPMLKYVFIVLYANDNGDGGTFALYSLISRYAKIRMIPNQQAEDAMVSNYSIEAPSSQLRRAQWVKHKLESSRAAKMALFFLTILGTSMVMGDGTLTPAISVLSAVSGIREKAPNLTQTQVVLISVAILFMLFSVQRFGTDKVGYTFAPIISVWFLLIAGIGLYNLVVHEITILKAFNPWYIVQYFRRNGKKGWVSLGGVVLCVTGTEGMFADLGHFNIRAVQISFNCILFPSVALCYIGQAAYLRKFPENVSDTFYKSIPGKYRDRLNFGPLFWPTFIVAILAAIIASQAMLSGAFAILSKALSLGCLPRVRVIHTSKKYEGQVYIPEVNFMMGLASIIVTIAFRTTTSIGNAYGICVVTTFMVTTHLMTVVMLLIWKKHLVFILLFYCVFGFTEVVYLSSILSKFVDGGYLPFCFAMVLMTMMATWHYVHVRRYWYELDHIVPTAELASLLEENGGVRRVPGVGLLYTELVQGIPPLFPRLVRKIPSVHAVFVFISIKHLPIPHVAAAERFLFRQVGPRARRVFRCVARYGYTDALEEPREFAAFLVDGLKMFIQEESAFAPHQEMIDAAADDDDEAAARPRRSTSSAVHSEEAIQAASSGRTTASSVQLQAGGEPPAAMDVEEEKRLIDREVGRGVVYLMGEANVSAGPNSSILKRIAVNYIYTFLRKNLTEGHRALAIPNDQLLKVGITYEI.

The segment at 1-20 is disordered; it reads MSSALEVEGSGSPGVEPAAT. The Cytoplasmic segment spans residues 1–57; that stretch reads MSSALEVEGSGSPGVEPAATATASRLKRHDSLFGDAEKVSGGKHHGGSAVSWAVTLH. The chain crosses the membrane as a helical span at residues 58 to 80; sequence LAFQSVGIIYGDIGTSPLYVYSS. Residues 81–94 lie on the Extracellular side of the membrane; it reads TFPDGIGHRDDLVG. Residues 95–115 traverse the membrane as a helical segment; it reads VLSLILYTLIIIPMLKYVFIV. Residues 116-181 are Cytoplasmic-facing; sequence LYANDNGDGG…HKLESSRAAK (66 aa). The chain crosses the membrane as a helical span at residues 182 to 202; that stretch reads MALFFLTILGTSMVMGDGTLT. Over 203–219 the chain is Extracellular; that stretch reads PAISVLSAVSGIREKAP. A helical membrane pass occupies residues 220–240; sequence NLTQTQVVLISVAILFMLFSV. Residues 241-247 lie on the Cytoplasmic side of the membrane; sequence QRFGTDK. A helical membrane pass occupies residues 248–268; that stretch reads VGYTFAPIISVWFLLIAGIGL. The Extracellular segment spans residues 269–298; it reads YNLVVHEITILKAFNPWYIVQYFRRNGKKG. The chain crosses the membrane as a helical span at residues 299–319; the sequence is WVSLGGVVLCVTGTEGMFADL. The Cytoplasmic portion of the chain corresponds to 320-328; the sequence is GHFNIRAVQ. A helical membrane pass occupies residues 329–349; it reads ISFNCILFPSVALCYIGQAAY. Residues 350–375 are Extracellular-facing; sequence LRKFPENVSDTFYKSIPGKYRDRLNF. Residues 376 to 398 form a helical membrane-spanning segment; it reads GPLFWPTFIVAILAAIIASQAML. Over 399–429 the chain is Cytoplasmic; it reads SGAFAILSKALSLGCLPRVRVIHTSKKYEGQ. A helical membrane pass occupies residues 430–450; it reads VYIPEVNFMMGLASIIVTIAF. At 451 to 461 the chain is on the extracellular side; sequence RTTTSIGNAYG. Residues 462-482 traverse the membrane as a helical segment; the sequence is ICVVTTFMVTTHLMTVVMLLI. At 483 to 487 the chain is on the cytoplasmic side; sequence WKKHL. The helical transmembrane segment at 488–508 threads the bilayer; it reads VFILLFYCVFGFTEVVYLSSI. Over 509-511 the chain is Extracellular; the sequence is LSK. Residues 512 to 532 traverse the membrane as a helical segment; sequence FVDGGYLPFCFAMVLMTMMAT. The Cytoplasmic portion of the chain corresponds to 533-801; it reads WHYVHVRRYW…LLKVGITYEI (269 aa). The segment at 679–728 is disordered; the sequence is DDDDEAAARPRRSTSSAVHSEEAIQAASSGRTTASSVQLQAGGEPPAAMD. Positions 704–717 are enriched in polar residues; the sequence is AASSGRTTASSVQL.

It belongs to the HAK/KUP transporter (TC 2.A.72.3) family. In terms of tissue distribution, expressed almost exclusively in roots.

Its subcellular location is the cell membrane. Functionally, high-affinity potassium transporter. Also transports rubidium, with the same affinity and cesium, with a lower affinity. In Oryza sativa subsp. japonica (Rice), this protein is Potassium transporter 1 (HAK1).